The primary structure comprises 122 residues: Large ribosomal subunit protein uL14 (122 aa).

This sequence belongs to the universal ribosomal protein uL14 family. In terms of assembly, part of the 50S ribosomal subunit. Forms a cluster with proteins L3 and L19. In the 70S ribosome, L14 and L19 interact and together make contacts with the 16S rRNA in bridges B5 and B8.

Functionally, binds to 23S rRNA. Forms part of two intersubunit bridges in the 70S ribosome. The sequence is that of Large ribosomal subunit protein uL14 from Bacillus mycoides (strain KBAB4) (Bacillus weihenstephanensis).